A 266-amino-acid chain; its full sequence is Undecaprenyl-diphosphatase (266 aa).

The next 8 membrane-spanning stretches (helical) occupy residues 4-24 (WLIA…PVSS), 46-66 (VLIQ…RLWG), 82-102 (IGIL…HDFI), 105-125 (VLYE…FILL), 142-162 (YPLK…VPGV), 182-202 (AAEF…AYDL), 216-236 (LIGI…KTVL), and 244-264 (FAPF…LLYI).

This sequence belongs to the UppP family.

The protein resides in the cell inner membrane. It catalyses the reaction di-trans,octa-cis-undecaprenyl diphosphate + H2O = di-trans,octa-cis-undecaprenyl phosphate + phosphate + H(+). Functionally, catalyzes the dephosphorylation of undecaprenyl diphosphate (UPP). Confers resistance to bacitracin. The protein is Undecaprenyl-diphosphatase of Caulobacter vibrioides (strain ATCC 19089 / CIP 103742 / CB 15) (Caulobacter crescentus).